A 38-amino-acid polypeptide reads, in one-letter code: Large ribosomal subunit protein bL36 (38 aa).

It belongs to the bacterial ribosomal protein bL36 family.

This chain is Large ribosomal subunit protein bL36, found in Lactobacillus acidophilus (strain ATCC 700396 / NCK56 / N2 / NCFM).